The following is a 162-amino-acid chain: Caveolin-2 (162 aa).

The Cytoplasmic segment spans residues 1–86 (MGLETEKADV…FEISKYVIYK (86 aa)). The residue at position 19 (tyrosine 19) is a Phosphotyrosine; by SRC. Serine 20 and serine 23 each carry phosphoserine. Phosphotyrosine; by SRC is present on tyrosine 27. The residue at position 36 (serine 36) is a Phosphoserine. The helical intramembrane region spans 87–107 (FLTVFLAIPLAFAAGIIFATL). Over 108–162 (SCLHIWIIMPFVKTCLMVLPSVQTIWRSVTDAVIAPLCTSVGRVFSSVSLQLSRD) the chain is Cytoplasmic.

Belongs to the caveolin family. In terms of assembly, monomer or homodimer. Interacts with CAV1; the interaction forms a stable heterooligomeric complex that is required for targeting to lipid rafts and for caveolae formation. Tyrosine phosphorylated forms do not form heterooligomers with the Tyr-19-phosphorylated form existing as a monomer or dimer, and the Tyr-27-form as a monomer only. Interacts (tyrosine phosphorylated form) with the SH2 domain-containing proteins, RASA1, NCK1 and SRC. Interacts (tyrosine phosphorylated form) with INSR, the interaction (Tyr-27-phosphorylated form) is increased on insulin stimulation. Interacts (Tyr-19 phosphorylated form) with MAPK1 (phosphorylated form); the interaction, promoted by insulin, leads to nuclear location and MAPK1 activation. Interacts with STAT3; the interaction is increased on insulin-induced tyrosine phosphorylation leading to STAT activation. Phosphorylated on serine and tyrosine residues. CAV1 promotes phosphorylation on Ser-23 which then targets the complex to the plasma membrane, lipid rafts and caveolae. Phosphorylation on Ser-36 appears to modulate mitosis in endothelial cells. Phosphorylation on both Tyr-19 and Tyr-27 is required for insulin-induced 'Ser-727' phosphorylation of STAT3 and its activation. Phosphorylation on Tyr-19 is required for insulin-induced phosphorylation of MAPK1 and DNA binding of STAT3. Tyrosine phosphorylation is induced by both EGF and insulin (By. similarity).

It localises to the nucleus. The protein resides in the cytoplasm. Its subcellular location is the golgi apparatus membrane. It is found in the cell membrane. The protein localises to the membrane. It localises to the caveola. Functionally, may act as a scaffolding protein within caveolar membranes. Interacts directly with G-protein alpha subunits and can functionally regulate their activity. Acts as an accessory protein in conjunction with CAV1 in targeting to lipid rafts and driving caveolae formation. The Ser-36 phosphorylated form has a role in modulating mitosis in endothelial cells. Positive regulator of cellular mitogenesis of the MAPK signaling pathway. Required for the insulin-stimulated nuclear translocation and activation of MAPK1 and STAT3, and the subsequent regulation of cell cycle progression. The sequence is that of Caveolin-2 (CAV2) from Carollia perspicillata (Seba's short-tailed bat).